Reading from the N-terminus, the 267-residue chain is MDNRPIGLLDSGFGGLSVAKKVIEKLPNESTIFIGDNAHIPYGDRTREDIINLTRRSVKFLLEKNVKLIVIACNTATAVAMPTMQKEVEQQIIGVIQSGALAAARTTKNKNVAVVATNVTVASHAYQKEIKFRDPEIKVTELAAPKLAPLVEAQKDYATNLKVVKESLAPLMGKEFDTLVLGCTHYPLIQKEFEEAINNKEVTILDPADQVAQYTFNVMRRDGLFSDSEKAVHEYYTTGNSETFDKLARTFMDDDTLTSKHVDTENY.

Substrate is bound by residues Asp-10–Ser-11 and Tyr-42–Gly-43. Catalysis depends on Cys-73, which acts as the Proton donor/acceptor. Asn-74–Thr-75 contributes to the substrate binding site. Cys-183 serves as the catalytic Proton donor/acceptor. Thr-184 to His-185 contributes to the substrate binding site.

Belongs to the aspartate/glutamate racemases family.

It carries out the reaction L-glutamate = D-glutamate. Its pathway is cell wall biogenesis; peptidoglycan biosynthesis. In terms of biological role, provides the (R)-glutamate required for cell wall biosynthesis. This is Glutamate racemase from Lactobacillus acidophilus (strain ATCC 700396 / NCK56 / N2 / NCFM).